A 288-amino-acid polypeptide reads, in one-letter code: PAK4-inhibitor inka2 (288 aa).

The segment at 159 to 196 is inka box; sequence DPTDWTTSLLTRGRNRQPLVLGDNSFADLIKNWMDLPE.

It belongs to the INKA family.

It localises to the nucleus. Its function is as follows. Inhibitor of the serine/threonine-protein kinase pak4/pak5. Acts by binding pak4/pak5 in a substrate-like manner, inhibiting the protein kinase activity. The chain is PAK4-inhibitor inka2 from Danio rerio (Zebrafish).